The chain runs to 375 residues: Succinyl-diaminopimelate desuccinylase (375 aa).

Residue histidine 66 coordinates Zn(2+). Residue aspartate 68 is part of the active site. Residue aspartate 99 participates in Zn(2+) binding. Residue glutamate 133 is the Proton acceptor of the active site. Residues glutamate 134, glutamate 162, and histidine 348 each coordinate Zn(2+).

This sequence belongs to the peptidase M20A family. DapE subfamily. Homodimer. Requires Zn(2+) as cofactor. The cofactor is Co(2+).

It carries out the reaction N-succinyl-(2S,6S)-2,6-diaminopimelate + H2O = (2S,6S)-2,6-diaminopimelate + succinate. It functions in the pathway amino-acid biosynthesis; L-lysine biosynthesis via DAP pathway; LL-2,6-diaminopimelate from (S)-tetrahydrodipicolinate (succinylase route): step 3/3. In terms of biological role, catalyzes the hydrolysis of N-succinyl-L,L-diaminopimelic acid (SDAP), forming succinate and LL-2,6-diaminopimelate (DAP), an intermediate involved in the bacterial biosynthesis of lysine and meso-diaminopimelic acid, an essential component of bacterial cell walls. This chain is Succinyl-diaminopimelate desuccinylase, found in Escherichia coli (strain SE11).